The primary structure comprises 93 residues: Co-chaperonin GroES (93 aa).

Belongs to the GroES chaperonin family. As to quaternary structure, heptamer of 7 subunits arranged in a ring. Interacts with the chaperonin GroEL.

The protein localises to the cytoplasm. Functionally, together with the chaperonin GroEL, plays an essential role in assisting protein folding. The GroEL-GroES system forms a nano-cage that allows encapsulation of the non-native substrate proteins and provides a physical environment optimized to promote and accelerate protein folding. GroES binds to the apical surface of the GroEL ring, thereby capping the opening of the GroEL channel. The sequence is that of Co-chaperonin GroES from Geobacillus kaustophilus (strain HTA426).